The primary structure comprises 226 residues: Ribose-5-phosphate isomerase A (226 aa).

Residues 28–31, 84–87, and 97–100 each bind substrate; these read TGST, DGAD, and KGLG. E106 serves as the catalytic Proton acceptor. Position 124 (K124) interacts with substrate.

It belongs to the ribose 5-phosphate isomerase family. Homodimer.

It catalyses the reaction aldehydo-D-ribose 5-phosphate = D-ribulose 5-phosphate. It participates in carbohydrate degradation; pentose phosphate pathway; D-ribose 5-phosphate from D-ribulose 5-phosphate (non-oxidative stage): step 1/1. Functionally, catalyzes the reversible conversion of ribose-5-phosphate to ribulose 5-phosphate. The chain is Ribose-5-phosphate isomerase A from Deinococcus radiodurans (strain ATCC 13939 / DSM 20539 / JCM 16871 / CCUG 27074 / LMG 4051 / NBRC 15346 / NCIMB 9279 / VKM B-1422 / R1).